Consider the following 567-residue polypeptide: Potassium-transporting ATPase potassium-binding subunit (567 aa).

Helical transmembrane passes span 5–25 (GWIQILVFCGIIILLVKPLGG), 64–84 (TTYAASLLLFNLAGFLLLYML), 136–156 (GLTVQNFVSAATGVAIAIALI), 179–199 (LYVLLPLCIILTLAFVSLGVP), 254–274 (ISNMIQMVAIFAIGASLTNVF), 285–305 (WAIFAAMGILFVAGVAICYWA), 332–352 (IAMSALFAVVTTAASCGAVIA), 359–376 (ALGGMIPMINMMLGEIII), 421–441 (MLAVLCLPLSILGFTAIASVI), 486–506 (ITIGLAMLMGRFLVILPAMAI), and 529–549 (LFVGLLIGVILVVGGLIFFPA).

The protein belongs to the KdpA family. In terms of assembly, the system is composed of three essential subunits: KdpA, KdpB and KdpC.

It localises to the cell inner membrane. Its function is as follows. Part of the high-affinity ATP-driven potassium transport (or Kdp) system, which catalyzes the hydrolysis of ATP coupled with the electrogenic transport of potassium into the cytoplasm. This subunit binds the periplasmic potassium ions and delivers the ions to the membrane domain of KdpB through an intramembrane tunnel. This is Potassium-transporting ATPase potassium-binding subunit from Brucella anthropi (strain ATCC 49188 / DSM 6882 / CCUG 24695 / JCM 21032 / LMG 3331 / NBRC 15819 / NCTC 12168 / Alc 37) (Ochrobactrum anthropi).